The primary structure comprises 320 residues: Lipoyl synthase (320 aa).

Residues 1–11 (MGGMNDLSSTP) are compositionally biased toward polar residues. Positions 1–24 (MGGMNDLSSTPAPEGDRPARQRKP) are disordered. Over residues 14 to 24 (EGDRPARQRKP) the composition is skewed to basic and acidic residues. Residues Cys53, Cys58, Cys64, Cys79, Cys83, Cys86, and Ser293 each coordinate [4Fe-4S] cluster. One can recognise a Radical SAM core domain in the interval 65–282 (WTKKHATVMI…GAIARAKGFL (218 aa)).

The protein belongs to the radical SAM superfamily. Lipoyl synthase family. The cofactor is [4Fe-4S] cluster.

The protein resides in the cytoplasm. The enzyme catalyses [[Fe-S] cluster scaffold protein carrying a second [4Fe-4S](2+) cluster] + N(6)-octanoyl-L-lysyl-[protein] + 2 oxidized [2Fe-2S]-[ferredoxin] + 2 S-adenosyl-L-methionine + 4 H(+) = [[Fe-S] cluster scaffold protein] + N(6)-[(R)-dihydrolipoyl]-L-lysyl-[protein] + 4 Fe(3+) + 2 hydrogen sulfide + 2 5'-deoxyadenosine + 2 L-methionine + 2 reduced [2Fe-2S]-[ferredoxin]. It functions in the pathway protein modification; protein lipoylation via endogenous pathway; protein N(6)-(lipoyl)lysine from octanoyl-[acyl-carrier-protein]: step 2/2. In terms of biological role, catalyzes the radical-mediated insertion of two sulfur atoms into the C-6 and C-8 positions of the octanoyl moiety bound to the lipoyl domains of lipoate-dependent enzymes, thereby converting the octanoylated domains into lipoylated derivatives. In Erythrobacter litoralis (strain HTCC2594), this protein is Lipoyl synthase.